The chain runs to 40 residues: Photosystem II reaction center protein J (40 aa).

A helical membrane pass occupies residues 10-30; it reads LWIIGTVTGILVIGLIGIFFF.

Belongs to the PsbJ family. PSII is composed of 1 copy each of membrane proteins PsbA, PsbB, PsbC, PsbD, PsbE, PsbF, PsbH, PsbI, PsbJ, PsbK, PsbL, PsbM, PsbT, PsbX, PsbY, PsbZ, Psb30/Ycf12, at least 3 peripheral proteins of the oxygen-evolving complex and a large number of cofactors. It forms dimeric complexes.

It is found in the plastid membrane. In terms of biological role, one of the components of the core complex of photosystem II (PSII). PSII is a light-driven water:plastoquinone oxidoreductase that uses light energy to abstract electrons from H(2)O, generating O(2) and a proton gradient subsequently used for ATP formation. It consists of a core antenna complex that captures photons, and an electron transfer chain that converts photonic excitation into a charge separation. This is Photosystem II reaction center protein J from Cuscuta exaltata (Tall dodder).